Consider the following 833-residue polypeptide: Coiled-coil domain-containing protein 110 (833 aa).

Residues 431-778 (LQNYLKESVQ…REYLNLSDKI (348 aa)) are a coiled coil.

It is found in the nucleus. This is Coiled-coil domain-containing protein 110 (CCDC110) from Macaca fascicularis (Crab-eating macaque).